A 258-amino-acid polypeptide reads, in one-letter code: Cytochrome c oxidase subunit 2 (258 aa).

The Mitochondrial intermembrane portion of the chain corresponds to 1–41 (MIVNECLFFTIALCDAAEPWQLGFQDAATPMMQGIIDLHHD). A helical membrane pass occupies residues 42 to 58 (ILFFLILILVFVLWILV). Topologically, residues 59–82 (RALWHFYYKKNPIPQRIVHGTTIE) are mitochondrial matrix. A helical transmembrane segment spans residues 83–104 (ILWTIFPSIILMFIAIPSFALL). The Mitochondrial intermembrane segment spans residues 105–258 (YSMDEVVVDP…VSNLFIPPTS (154 aa)). Residues His-187, Cys-222, Glu-224, Cys-226, His-230, and Met-233 each contribute to the Cu cation site. Glu-224 provides a ligand contact to Mg(2+).

The protein belongs to the cytochrome c oxidase subunit 2 family. In terms of assembly, component of the cytochrome c oxidase (complex IV, CIV), a multisubunit enzyme composed of a catalytic core of 3 subunits and several supernumerary subunits. The complex exists as a monomer or a dimer and forms supercomplexes (SCs) in the inner mitochondrial membrane with ubiquinol-cytochrome c oxidoreductase (cytochrome b-c1 complex, complex III, CIII). Requires Cu cation as cofactor.

The protein localises to the mitochondrion inner membrane. The enzyme catalyses 4 Fe(II)-[cytochrome c] + O2 + 8 H(+)(in) = 4 Fe(III)-[cytochrome c] + 2 H2O + 4 H(+)(out). Component of the cytochrome c oxidase, the last enzyme in the mitochondrial electron transport chain which drives oxidative phosphorylation. The respiratory chain contains 3 multisubunit complexes succinate dehydrogenase (complex II, CII), ubiquinol-cytochrome c oxidoreductase (cytochrome b-c1 complex, complex III, CIII) and cytochrome c oxidase (complex IV, CIV), that cooperate to transfer electrons derived from NADH and succinate to molecular oxygen, creating an electrochemical gradient over the inner membrane that drives transmembrane transport and the ATP synthase. Cytochrome c oxidase is the component of the respiratory chain that catalyzes the reduction of oxygen to water. Electrons originating from reduced cytochrome c in the intermembrane space (IMS) are transferred via the dinuclear copper A center (CU(A)) of subunit 2 and heme A of subunit 1 to the active site in subunit 1, a binuclear center (BNC) formed by heme A3 and copper B (CU(B)). The BNC reduces molecular oxygen to 2 water molecules using 4 electrons from cytochrome c in the IMS and 4 protons from the mitochondrial matrix. This is Cytochrome c oxidase subunit 2 (COX2) from Oenothera berteroana (Bertero's evening primrose).